The following is a 144-amino-acid chain: Putative pre-16S rRNA nuclease (144 aa).

Belongs to the YqgF nuclease family.

It is found in the cytoplasm. Functionally, could be a nuclease involved in processing of the 5'-end of pre-16S rRNA. The sequence is that of Putative pre-16S rRNA nuclease from Pseudomonas aeruginosa (strain LESB58).